The primary structure comprises 70 residues: Small ribosomal subunit protein bS21 (70 aa).

This sequence belongs to the bacterial ribosomal protein bS21 family.

The polypeptide is Small ribosomal subunit protein bS21 (Delftia acidovorans (strain DSM 14801 / SPH-1)).